The primary structure comprises 363 residues: Large ribosomal subunit protein uL4A (363 aa).

Position 87 is a phosphoserine (S87). The tract at residues 280-363 (PENIISNADV…EKFLTVLHEN (84 aa)) is C-terminal-extended nuclear localization signal.

The protein belongs to the universal ribosomal protein uL4 family. In terms of assembly, component of the large ribosomal subunit (LSU). Mature yeast ribosomes consist of a small (40S) and a large (60S) subunit. The 40S small subunit contains 1 molecule of ribosomal RNA (18S rRNA) and at least 33 different proteins. The large 60S subunit contains 3 rRNA molecules (25S, 5.8S and 5S rRNA) and at least 46 different proteins. uL4 is associated with the polypeptide exit tunnel. uL4 interacts with its chaperone ACL4 and the nuclear import receptor KAP104.

The protein resides in the cytoplasm. Its subcellular location is the nucleus. Component of the ribosome, a large ribonucleoprotein complex responsible for the synthesis of proteins in the cell. The small ribosomal subunit (SSU) binds messenger RNAs (mRNAs) and translates the encoded message by selecting cognate aminoacyl-transfer RNA (tRNA) molecules. The large subunit (LSU) contains the ribosomal catalytic site termed the peptidyl transferase center (PTC), which catalyzes the formation of peptide bonds, thereby polymerizing the amino acids delivered by tRNAs into a polypeptide chain. The nascent polypeptides leave the ribosome through a tunnel in the LSU and interact with protein factors that function in enzymatic processing, targeting, and the membrane insertion of nascent chains at the exit of the ribosomal tunnel. uL4 participates in the regulation of the accumulation of its own mRNA. This Schizosaccharomyces pombe (strain 972 / ATCC 24843) (Fission yeast) protein is Large ribosomal subunit protein uL4A (rpl402).